We begin with the raw amino-acid sequence, 183 residues long: Lipocalin (183 aa).

Residues 1 to 20 form the signal peptide; that stretch reads MKGLVLSFALVALSALCVYG. Cysteine 83 and cysteine 179 are oxidised to a cystine.

It belongs to the calycin superfamily. Lipocalin family. As to quaternary structure, monomer. As to expression, expressed mainly in choroid plexus. Much lower expression in other brain areas, and absent from liver.

It localises to the secreted. Functionally, might have a transport function across the blood brain barrier. Is supposed to have similar functions as a transthyretin which must have evolved after the stage of the amphibians in evolution. In Rhinella marina (Cane toad), this protein is Lipocalin.